The primary structure comprises 101 residues: Small ribosomal subunit protein uS14 (101 aa).

Belongs to the universal ribosomal protein uS14 family. Part of the 30S ribosomal subunit. Contacts proteins S3 and S10.

Functionally, binds 16S rRNA, required for the assembly of 30S particles and may also be responsible for determining the conformation of the 16S rRNA at the A site. The sequence is that of Small ribosomal subunit protein uS14 from Pseudoalteromonas atlantica (strain T6c / ATCC BAA-1087).